Reading from the N-terminus, the 255-residue chain is Membrane protein insertase YidC 2 (255 aa).

The N-terminal stretch at 1–20 is a signal peptide; the sequence is MKKKLGLLAMVVALMAITAG. Cys-21 is lipidated: N-palmitoyl cysteine. Cys-21 carries S-diacylglycerol cysteine lipidation. The next 5 membrane-spanning stretches (helical) occupy residues 59–79, 129–149, 160–180, 202–222, and 223–243; these read YGLA…PLMI, LAGC…YHAI, FLWF…VAAI, MMLW…PAAL, and SLYW…IKGP.

It belongs to the OXA1/ALB3/YidC family. Type 2 subfamily.

It localises to the cell membrane. Required for the insertion and/or proper folding and/or complex formation of integral membrane proteins into the membrane. Involved in integration of membrane proteins that insert both dependently and independently of the Sec translocase complex, as well as at least some lipoproteins. The chain is Membrane protein insertase YidC 2 from Bacillus anthracis.